A 390-amino-acid chain; its full sequence is Cystathionine beta-lyase (390 aa).

N6-(pyridoxal phosphate)lysine is present on Lys202.

This sequence belongs to the trans-sulfuration enzymes family. Requires pyridoxal 5'-phosphate as cofactor.

The protein localises to the cytoplasm. Its subcellular location is the nucleus. It carries out the reaction L,L-cystathionine + H2O = L-homocysteine + pyruvate + NH4(+). It catalyses the reaction an S-substituted L-cysteine + H2O = a thiol + pyruvate + NH4(+). Its pathway is amino-acid biosynthesis; L-methionine biosynthesis via de novo pathway; L-homocysteine from L-cystathionine: step 1/1. The chain is Cystathionine beta-lyase (str3) from Schizosaccharomyces pombe (strain 972 / ATCC 24843) (Fission yeast).